The chain runs to 512 residues: Cobyric acid synthase (512 aa).

Residues 262 to 442 (WLRVAAIRLP…WHGLLETDRF (181 aa)) form the GATase cobBQ-type domain. Cys-343 functions as the Nucleophile in the catalytic mechanism. Residue His-434 is part of the active site.

The protein belongs to the CobB/CobQ family. CobQ subfamily.

It participates in cofactor biosynthesis; adenosylcobalamin biosynthesis. Its function is as follows. Catalyzes amidations at positions B, D, E, and G on adenosylcobyrinic A,C-diamide. NH(2) groups are provided by glutamine, and one molecule of ATP is hydrogenolyzed for each amidation. This is Cobyric acid synthase from Rhodococcus jostii (strain RHA1).